Here is a 531-residue protein sequence, read N- to C-terminus: Anthranilate synthase component 1 (531 aa).

L-tryptophan-binding positions include serine 56 and 284–286; that span reads PYM. A chorismate-binding site is contributed by 324–325; the sequence is GS. Glutamate 351 provides a ligand contact to Mg(2+). Chorismate is bound by residues tyrosine 439, arginine 459, 473–475, and glycine 475; that span reads GGG. Glutamate 488 contributes to the Mg(2+) binding site. Positions 506–531 are disordered; it reads LHNITPDSVSAPDSVSSPDSVTEANS. Positions 511–531 are enriched in low complexity; sequence PDSVSAPDSVSSPDSVTEANS.

Belongs to the anthranilate synthase component I family. As to quaternary structure, heterotetramer consisting of two non-identical subunits: a beta subunit (TrpG) and a large alpha subunit (TrpE). It depends on Mg(2+) as a cofactor.

It catalyses the reaction chorismate + L-glutamine = anthranilate + pyruvate + L-glutamate + H(+). Its pathway is amino-acid biosynthesis; L-tryptophan biosynthesis; L-tryptophan from chorismate: step 1/5. Its activity is regulated as follows. Feedback inhibited by tryptophan. Functionally, part of a heterotetrameric complex that catalyzes the two-step biosynthesis of anthranilate, an intermediate in the biosynthesis of L-tryptophan. In the first step, the glutamine-binding beta subunit (TrpG) of anthranilate synthase (AS) provides the glutamine amidotransferase activity which generates ammonia as a substrate that, along with chorismate, is used in the second step, catalyzed by the large alpha subunit of AS (TrpE) to produce anthranilate. In the absence of TrpG, TrpE can synthesize anthranilate directly from chorismate and high concentrations of ammonia. This chain is Anthranilate synthase component 1 (trpE), found in Arthrobacter globiformis.